Here is a 98-residue protein sequence, read N- to C-terminus: Cystatin-A (98 aa).

N-acetylmethionine is present on methionine 1. Positions 46-50 (QVVAG) match the Secondary area of contact motif.

Belongs to the cystatin family. Expressed in the skin throughout the epidermis.

The protein localises to the cytoplasm. This is an intracellular thiol proteinase inhibitor. Has an important role in desmosome-mediated cell-cell adhesion in the lower levels of the epidermis. The protein is Cystatin-A (CSTA) of Homo sapiens (Human).